The primary structure comprises 312 residues: Aspartate carbamoyltransferase catalytic subunit (312 aa).

Carbamoyl phosphate is bound by residues arginine 62 and threonine 63. Position 90 (lysine 90) interacts with L-aspartate. The carbamoyl phosphate site is built by arginine 112, histidine 140, and glutamine 143. Residues arginine 173 and arginine 228 each coordinate L-aspartate. Positions 269 and 270 each coordinate carbamoyl phosphate.

The protein belongs to the aspartate/ornithine carbamoyltransferase superfamily. ATCase family. In terms of assembly, heterododecamer (2C3:3R2) of six catalytic PyrB chains organized as two trimers (C3), and six regulatory PyrI chains organized as three dimers (R2).

The enzyme catalyses carbamoyl phosphate + L-aspartate = N-carbamoyl-L-aspartate + phosphate + H(+). Its pathway is pyrimidine metabolism; UMP biosynthesis via de novo pathway; (S)-dihydroorotate from bicarbonate: step 2/3. Its function is as follows. Catalyzes the condensation of carbamoyl phosphate and aspartate to form carbamoyl aspartate and inorganic phosphate, the committed step in the de novo pyrimidine nucleotide biosynthesis pathway. The polypeptide is Aspartate carbamoyltransferase catalytic subunit (Deinococcus geothermalis (strain DSM 11300 / CIP 105573 / AG-3a)).